A 160-amino-acid polypeptide reads, in one-letter code: Transcription antitermination protein NusB (160 aa).

Belongs to the NusB family.

In terms of biological role, involved in transcription antitermination. Required for transcription of ribosomal RNA (rRNA) genes. Binds specifically to the boxA antiterminator sequence of the ribosomal RNA (rrn) operons. The protein is Transcription antitermination protein NusB of Rhizobium leguminosarum bv. trifolii (strain WSM2304).